A 452-amino-acid chain; its full sequence is Exodeoxyribonuclease 7 large subunit (452 aa).

Belongs to the XseA family. In terms of assembly, heterooligomer composed of large and small subunits.

It localises to the cytoplasm. It catalyses the reaction Exonucleolytic cleavage in either 5'- to 3'- or 3'- to 5'-direction to yield nucleoside 5'-phosphates.. In terms of biological role, bidirectionally degrades single-stranded DNA into large acid-insoluble oligonucleotides, which are then degraded further into small acid-soluble oligonucleotides. The sequence is that of Exodeoxyribonuclease 7 large subunit from Bacillus cereus (strain G9842).